Reading from the N-terminus, the 718-residue chain is MTKLAQWMFEQYVKDLNLNNRGSPSFRKWLTLQPSLLRYSGVMRANAFDILKYGYPMQQSGYTVATLEIHFKNIRSSFANIYWNRDSEEPEYVCCCATYQSHDGEYRYRFVWYQPFIEAYNAIETALDPLETIILNLIAARDLDFVVHIFPYNKGHEDYLASTQLILKIFIATLLMDILRIKDNTLDVHLNSDYIIVMERLWPHIKDAIEHFFEAHKDLLGYLIAFRNGGNFAGSLRPSCGQKIVPLTIREALQINDINLAVWREVFIMQECSDLVINGIAPCFPIFNTWTYLQGINQIFFENTSLQEKFKKDFIARELSKEIIKGQKNLNDKEFKKLSLHQIQYMESFLLMSDVAIMITTEYVGYTLQSLPGIISRSSYVSPIVKNILTDEDSFMSLLFDLCYGAYVLHKKENVIHADLHLNNMTYYHFNPTSFTDRNKPGKYTLKVNNPVIAFITGPKVETETYVFKHIDGFGCIIDFSRAIMGPNHAIKLERQYGLAFVNTFYRNQSEHILKVLRYYFPEMLTNRENEIQGVILSNFNFFFNSITAIDFYAIARNLRSMLSLDYLHTSEVKRNVEISQTFLDTCQFLEEKAVEFLFKNLHTVISGKPVEKTAGDVLLPIVFKKFLYPNIPKNILRSFTVIDVYNYNNIKRYSGKAIQTFPPWAQTKEILTHAEGRTFEDIFPRGELVFKKAYAENNYLDKILQRIREQLANENLR.

It belongs to the asfivirus C717R family.

Its subcellular location is the virion. This is an uncharacterized protein from African swine fever virus (isolate Pig/Kenya/KEN-50/1950) (ASFV).